The following is a 209-amino-acid chain: Uracil phosphoribosyltransferase (209 aa).

Residues R79, R104, and 131–139 (DPMLATGGS) contribute to the 5-phospho-alpha-D-ribose 1-diphosphate site. Uracil-binding positions include I194 and 199–201 (GDA). A 5-phospho-alpha-D-ribose 1-diphosphate-binding site is contributed by D200.

Belongs to the UPRTase family. Requires Mg(2+) as cofactor.

The catalysed reaction is UMP + diphosphate = 5-phospho-alpha-D-ribose 1-diphosphate + uracil. It functions in the pathway pyrimidine metabolism; UMP biosynthesis via salvage pathway; UMP from uracil: step 1/1. Allosterically activated by GTP. Its function is as follows. Catalyzes the conversion of uracil and 5-phospho-alpha-D-ribose 1-diphosphate (PRPP) to UMP and diphosphate. The chain is Uracil phosphoribosyltransferase from Natranaerobius thermophilus (strain ATCC BAA-1301 / DSM 18059 / JW/NM-WN-LF).